The following is a 204-amino-acid chain: N-(5'-phosphoribosyl)anthranilate isomerase (204 aa).

Belongs to the TrpF family.

It carries out the reaction N-(5-phospho-beta-D-ribosyl)anthranilate = 1-(2-carboxyphenylamino)-1-deoxy-D-ribulose 5-phosphate. It participates in amino-acid biosynthesis; L-tryptophan biosynthesis; L-tryptophan from chorismate: step 3/5. The chain is N-(5'-phosphoribosyl)anthranilate isomerase from Desulforudis audaxviator (strain MP104C).